The following is a 204-amino-acid chain: Holliday junction branch migration complex subunit RuvA (204 aa).

A domain I region spans residues 1 to 64 (MIGRLCGTAE…EDAITLFGFI (64 aa)). Residues 65–143 (DAAERDWFRL…AMPTGSAFIP (79 aa)) form a domain II region. The interval 144–154 (TGTAPPVAPPQ) is flexible linker. Residues 154–204 (QGKLADALSALVNLGYRRAEAEAALSAVQAEAGEDAALDELIRGGLRRLAR) form a domain III region.

The protein belongs to the RuvA family. As to quaternary structure, homotetramer. Forms an RuvA(8)-RuvB(12)-Holliday junction (HJ) complex. HJ DNA is sandwiched between 2 RuvA tetramers; dsDNA enters through RuvA and exits via RuvB. An RuvB hexamer assembles on each DNA strand where it exits the tetramer. Each RuvB hexamer is contacted by two RuvA subunits (via domain III) on 2 adjacent RuvB subunits; this complex drives branch migration. In the full resolvosome a probable DNA-RuvA(4)-RuvB(12)-RuvC(2) complex forms which resolves the HJ.

The protein resides in the cytoplasm. In terms of biological role, the RuvA-RuvB-RuvC complex processes Holliday junction (HJ) DNA during genetic recombination and DNA repair, while the RuvA-RuvB complex plays an important role in the rescue of blocked DNA replication forks via replication fork reversal (RFR). RuvA specifically binds to HJ cruciform DNA, conferring on it an open structure. The RuvB hexamer acts as an ATP-dependent pump, pulling dsDNA into and through the RuvAB complex. HJ branch migration allows RuvC to scan DNA until it finds its consensus sequence, where it cleaves and resolves the cruciform DNA. This Acidiphilium cryptum (strain JF-5) protein is Holliday junction branch migration complex subunit RuvA.